Here is a 75-residue protein sequence, read N- to C-terminus: UPF0352 protein YejL (75 aa).

This sequence belongs to the UPF0352 family.

The chain is UPF0352 protein YejL from Shigella dysenteriae serotype 1 (strain Sd197).